We begin with the raw amino-acid sequence, 412 residues long: Multifunctional CCA protein (412 aa).

ATP contacts are provided by G8 and R11. CTP is bound by residues G8 and R11. The Mg(2+) site is built by D21 and D23. The ATP site is built by R91, R137, and R140. Positions 91, 137, and 140 each coordinate CTP. Positions 228-329 constitute an HD domain; that stretch reads TGIHTLMTLS…VKLFDSIDAW (102 aa).

The protein belongs to the tRNA nucleotidyltransferase/poly(A) polymerase family. Bacterial CCA-adding enzyme type 1 subfamily. Monomer. Can also form homodimers and oligomers. The cofactor is Mg(2+). Requires Ni(2+) as cofactor.

It carries out the reaction a tRNA precursor + 2 CTP + ATP = a tRNA with a 3' CCA end + 3 diphosphate. The enzyme catalyses a tRNA with a 3' CCA end + 2 CTP + ATP = a tRNA with a 3' CCACCA end + 3 diphosphate. Functionally, catalyzes the addition and repair of the essential 3'-terminal CCA sequence in tRNAs without using a nucleic acid template. Adds these three nucleotides in the order of C, C, and A to the tRNA nucleotide-73, using CTP and ATP as substrates and producing inorganic pyrophosphate. tRNA 3'-terminal CCA addition is required both for tRNA processing and repair. Also involved in tRNA surveillance by mediating tandem CCA addition to generate a CCACCA at the 3' terminus of unstable tRNAs. While stable tRNAs receive only 3'-terminal CCA, unstable tRNAs are marked with CCACCA and rapidly degraded. This is Multifunctional CCA protein from Escherichia coli O1:K1 / APEC.